Consider the following 374-residue polypeptide: Translocating chain-associated membrane protein 1 (374 aa).

Residues 1-32 (MAIRKKSNKNPPVLSHEFVLQNHADIVSCLAM) lie on the Cytoplasmic side of the membrane. A helical transmembrane segment spans residues 33–53 (LFLLGLMFEITAKGAIIFVAL). The Lumenal portion of the chain corresponds to 54–81 (QYNVTRPATEEQAAESASLYYYGIKDLA). The N-linked (GlcNAc...) asparagine glycan is linked to asparagine 56. The chain crosses the membrane as a helical span at residues 82 to 102 (TVFFYMLVAIIVHAIIQEYVL). Over 103-121 (DKINRRMHFSKTKHSKFNE) the chain is Cytoplasmic. One can recognise a TLC domain in the interval 117–326 (SKFNESGQLS…NFQLRRWREH (210 aa)). Residues 122–142 (SGQLSAFYLFACVWGTFILVS) traverse the membrane as a helical segment. Over 143 to 159 (ENYISDPTILWRAYPHN) the chain is Lumenal. A helical membrane pass occupies residues 160–180 (LMTFQMKFFYISQLAYWLHAF). Residues 181-192 (PELYFQKTKKED) are Cytoplasmic-facing. The chain crosses the membrane as a helical span at residues 193-213 (IPRQLVYIGLYLFHIAGAYLL). Residue asparagine 214 is a topological domain, lumenal. A helical transmembrane segment spans residues 215–235 (LNHLGLVLLVLHYFVEFLFHI). Residues 236 to 251 (SRLFYFSDEKYQKGFS) are Cytoplasmic-facing. A helical transmembrane segment spans residues 252 to 272 (LWAVLFVLGRLLTLILSVLTV). Topologically, residues 273 to 297 (GFGLARAENQKLDFSTGNFNVLAVR) are lumenal. Residues 298–318 (IAVLASICITQAFMMWKFINF) traverse the membrane as a helical segment. Topologically, residues 319-374 (QLRRWREHSAFQAPPVKRKPAVTKGRSSRKGTENGVNGTVTSNGADSPRSRKEKSS) are cytoplasmic. Residues 333-374 (PVKRKPAVTKGRSSRKGTENGVNGTVTSNGADSPRSRKEKSS) are disordered. Positions 334-347 (VKRKPAVTKGRSSR) are enriched in basic residues. Over residues 352–363 (NGVNGTVTSNGA) the composition is skewed to polar residues. Serine 365 carries the phosphoserine modification.

Belongs to the TRAM family. As to quaternary structure, interacts with SEC61B. May interact with Derlin-1/DERL1. N-glycosylated.

It is found in the endoplasmic reticulum membrane. In terms of biological role, involved in the translocation of nascent protein chains into or through the endoplasmic reticulum (ER) membrane by facilitating the proper chain positioning at the SEC61 channel. Regulates the exposure of nascent secretory protein chain to the cytosol during translocation into the ER. May affect the phospholipid bilayer in the vicinity of the lateral gate of the SEC61 channel, thereby facilitating ER protein transport. Intimately associates with transmembrane (TM) domain of nascent membrane proteins during the entire integration process into the ER membrane. Associates with the second TM domain of G-protein-coupled receptor opsin/OPSD nascent chain in the ER membrane, which may facilitate its integration into the membrane. Under conditions of ER stress, participates in the disposal of misfolded ER membrane proteins during the unfolded protein response (UPR), an integrated stress response (ISR) pathway, by selectively retrotranslocating misfolded ER-membrane proteins from the ER into the cytosol where they are ubiquitinated and degraded by the proteasome. The chain is Translocating chain-associated membrane protein 1 from Rattus norvegicus (Rat).